Consider the following 50-residue polypeptide: Sperm protamine P1 (50 aa).

It belongs to the protamine P1 family. Cross-linked by interchain disulfide bonds around the DNA-helix. In terms of tissue distribution, testis.

Its subcellular location is the nucleus. It localises to the chromosome. In terms of biological role, protamines substitute for histones in the chromatin of sperm during the haploid phase of spermatogenesis. They compact sperm DNA into a highly condensed, stable and inactive complex. The protein is Sperm protamine P1 (PRM1) of Pan paniscus (Pygmy chimpanzee).